The chain runs to 559 residues: DNA ligase (559 aa).

Glu247 contributes to the ATP binding site. Catalysis depends on Lys249, which acts as the N6-AMP-lysine intermediate. Arg254, Arg269, Glu299, Phe339, Arg414, and Lys420 together coordinate ATP.

It belongs to the ATP-dependent DNA ligase family. The cofactor is Mg(2+).

It catalyses the reaction ATP + (deoxyribonucleotide)n-3'-hydroxyl + 5'-phospho-(deoxyribonucleotide)m = (deoxyribonucleotide)n+m + AMP + diphosphate.. It carries out the reaction NAD(+) + (deoxyribonucleotide)n-3'-hydroxyl + 5'-phospho-(deoxyribonucleotide)m = (deoxyribonucleotide)n+m + AMP + beta-nicotinamide D-nucleotide.. In terms of biological role, DNA ligase that seals nicks in double-stranded DNA during DNA replication, DNA recombination and DNA repair. Shows high activity with either ATP or NAD(+). The sequence is that of DNA ligase from Thermococcus fumicolans.